An 81-amino-acid chain; its full sequence is Photosystem I iron-sulfur center (81 aa).

2 4Fe-4S ferredoxin-type domains span residues 2 to 31 (SHSV…MIPW) and 39 to 68 (IAPA…VRVY). [4Fe-4S] cluster is bound by residues Cys11, Cys14, Cys17, Cys21, Cys48, Cys51, Cys54, and Cys58.

As to quaternary structure, the eukaryotic PSI reaction center is composed of at least 11 subunits. [4Fe-4S] cluster is required as a cofactor.

The protein localises to the plastid. It is found in the chloroplast thylakoid membrane. The catalysed reaction is reduced [plastocyanin] + hnu + oxidized [2Fe-2S]-[ferredoxin] = oxidized [plastocyanin] + reduced [2Fe-2S]-[ferredoxin]. Functionally, apoprotein for the two 4Fe-4S centers FA and FB of photosystem I (PSI); essential for photochemical activity. FB is the terminal electron acceptor of PSI, donating electrons to ferredoxin. The C-terminus interacts with PsaA/B/D and helps assemble the protein into the PSI complex. Required for binding of PsaD and PsaE to PSI. PSI is a plastocyanin-ferredoxin oxidoreductase, converting photonic excitation into a charge separation, which transfers an electron from the donor P700 chlorophyll pair to the spectroscopically characterized acceptors A0, A1, FX, FA and FB in turn. In Drimys granadensis, this protein is Photosystem I iron-sulfur center.